The sequence spans 282 residues: Bifunctional protein FolD (282 aa).

NADP(+) is bound by residues glycine 167 to serine 169 and serine 192.

The protein belongs to the tetrahydrofolate dehydrogenase/cyclohydrolase family. Homodimer.

The enzyme catalyses (6R)-5,10-methylene-5,6,7,8-tetrahydrofolate + NADP(+) = (6R)-5,10-methenyltetrahydrofolate + NADPH. It catalyses the reaction (6R)-5,10-methenyltetrahydrofolate + H2O = (6R)-10-formyltetrahydrofolate + H(+). It functions in the pathway one-carbon metabolism; tetrahydrofolate interconversion. Catalyzes the oxidation of 5,10-methylenetetrahydrofolate to 5,10-methenyltetrahydrofolate and then the hydrolysis of 5,10-methenyltetrahydrofolate to 10-formyltetrahydrofolate. In Acidobacterium capsulatum (strain ATCC 51196 / DSM 11244 / BCRC 80197 / JCM 7670 / NBRC 15755 / NCIMB 13165 / 161), this protein is Bifunctional protein FolD.